We begin with the raw amino-acid sequence, 534 residues long: Bifunctional pantoate ligase/cytidylate kinase (534 aa).

The tract at residues 1 to 302 is pantoate--beta-alanine ligase; the sequence is MRLLTTVAAL…LGSTRLIDNT (302 aa). Position 48-55 (48-55) interacts with ATP; sequence MGSLHQGH. Catalysis depends on His-55, which acts as the Proton donor. Gln-79 contacts (R)-pantoate. Gln-79 is a beta-alanine binding site. 172–175 contacts ATP; the sequence is GQKD. Gln-178 is a binding site for (R)-pantoate. ATP contacts are provided by residues Val-201 and 209 to 212; that span reads CSSR. Residues 303–534 are cytidylate kinase; that stretch reads ILRDRQPIIA…DYYQQRLSQW (232 aa).

In the N-terminal section; belongs to the pantothenate synthetase family. The protein in the C-terminal section; belongs to the cytidylate kinase family. Type 1 subfamily.

It localises to the cytoplasm. It catalyses the reaction (R)-pantoate + beta-alanine + ATP = (R)-pantothenate + AMP + diphosphate + H(+). It carries out the reaction CMP + ATP = CDP + ADP. The enzyme catalyses dCMP + ATP = dCDP + ADP. It functions in the pathway cofactor biosynthesis; (R)-pantothenate biosynthesis; (R)-pantothenate from (R)-pantoate and beta-alanine: step 1/1. Its function is as follows. Catalyzes the condensation of pantoate with beta-alanine in an ATP-dependent reaction via a pantoyl-adenylate intermediate. Functionally, catalyzes the transfer of a phosphate group from ATP to either CMP or dCMP to form CDP or dCDP and ADP, respectively. In Nostoc sp. (strain PCC 7120 / SAG 25.82 / UTEX 2576), this protein is Bifunctional pantoate ligase/cytidylate kinase.